The primary structure comprises 375 residues: G-protein coupled estrogen receptor 1 (375 aa).

Residue methionine 1 is modified to N-acetylmethionine. The Extracellular portion of the chain corresponds to 1–62; sequence MAATTPAQDV…QQYVIALFLS (62 aa). Residues asparagine 32 and asparagine 44 are each glycosylated (N-linked (GlcNAc...) asparagine). Residues 63–84 form a helical membrane-spanning segment; it reads CLYTIFLFPIGFVGNILILVVN. Over 85 to 96 the chain is Cytoplasmic; the sequence is ISFREKMTIPDL. A helical transmembrane segment spans residues 97–120; the sequence is YFINLAAADLILVADSLIEVFNLD. The Extracellular segment spans residues 121 to 132; it reads EQYYDIAVLCTF. A disulfide bridge connects residues cysteine 130 and cysteine 207. Residues 133–153 form a helical membrane-spanning segment; that stretch reads MSLFLQINMYSSVFFLTWMSF. Residues 154 to 175 are Cytoplasmic-facing; the sequence is DRYLALAKAMRCGLFRTKHHAR. The helical transmembrane segment at 176-194 threads the bilayer; sequence LSCGLIWMASVSATLVPFT. Over 195–220 the chain is Extracellular; the sequence is AVHLRHTEEACFCFADVREVQWLEVT. Residues 221 to 236 form a helical membrane-spanning segment; it reads LGFIVPFAIIGLCYSL. Over 237 to 259 the chain is Cytoplasmic; sequence IVRALIRAHRHRGLRPRRQKALR. A helical membrane pass occupies residues 260 to 280; sequence MIFAVVLVFFICWLPENVFIS. Over 281 to 306 the chain is Extracellular; that stretch reads VHLLQWAQPGDTPCKQSFRHAYPLTG. A helical transmembrane segment spans residues 307–327; the sequence is HIVNLAAFSNSCLSPLIYSFL. Residues 328–375 lie on the Cytoplasmic side of the membrane; sequence GETFRDKLRLYVAQKTSLPALNRFCHATLKAVIPDSTEQSDVKFSSAV.

The protein belongs to the G-protein coupled receptor 1 family. In terms of assembly, homodimer. Heterodimer; heterodimerizes with other G-protein-coupled receptor (GPCRs) like CRHR1, HTR1A and PAQR8. Interacts with RAMP3; the interaction confers proper subcellular localization and function in cardioprotection. Interacts with KRT7 and KRT8. Interacts with EGFR; the interaction increases after agonist-induced stimulation in cancer-associated fibroblasts (CAF). Interacts with EGFR and ESR1. Interacts (via C-terminus tail motif) with DLG4 (via N-terminus tandem pair of PDZ domains); the interaction is direct and induces the increase of GPER1 protein levels residing at the plasma membrane surface in a estradiol-independent manner. In terms of processing, ubiquitinated; ubiquitination occurs at the plasma membrane and leads to proteasome-mediated degradation. Post-translationally, glycosylated. In terms of tissue distribution, expressed in the brain. Expressed in neurons of the hippocampus, hypothalamic paraventricular nucleus (PVN), supraoptic nucleus (SON) and the median eminence. Expressed in magnocellular neurosecretory cells (MNCs) which secrete oxytocin but not in MNCs which secrete vasopressin. Expressed in glial cells. Expressed in the nucleus ambiguous. Expressed in epithelial cells, in pachytene spermatocytes (PS) (at protein level). Expressed strongly in vascular endothelial cells and poorly in vascular smooth muscle cells (VSMC). Expressed in the brain, lung, pituitary gland, adrenal medulla, renal pelvis and ovary. Expressed in CA1 hippocampus. Expressed weakly in heart, skeletal muscle and kidney.

It is found in the nucleus. The protein localises to the cytoplasm. It localises to the perinuclear region. Its subcellular location is the cytoskeleton. The protein resides in the cytoplasmic vesicle membrane. It is found in the cell membrane. The protein localises to the basolateral cell membrane. It localises to the endoplasmic reticulum membrane. Its subcellular location is the early endosome. The protein resides in the recycling endosome. It is found in the golgi apparatus. The protein localises to the trans-Golgi network. It localises to the golgi apparatus membrane. Its subcellular location is the cell projection. The protein resides in the dendrite. It is found in the dendritic spine membrane. The protein localises to the axon. It localises to the postsynaptic density. Its subcellular location is the mitochondrion membrane. Functionally, G-protein coupled estrogen receptor that binds to 17-beta-estradiol (E2) with high affinity, leading to rapid and transient activation of numerous intracellular signaling pathways. Stimulates cAMP production, calcium mobilization and tyrosine kinase Src inducing the release of heparin-bound epidermal growth factor (HB-EGF) and subsequent transactivation of the epidermal growth factor receptor (EGFR), activating downstream signaling pathways such as PI3K/Akt and ERK/MAPK. Mediates pleiotropic functions among others in the cardiovascular, endocrine, reproductive, immune and central nervous systems. Has a role in cardioprotection by reducing cardiac hypertrophy and perivascular fibrosis in a RAMP3-dependent manner. Regulates arterial blood pressure by stimulating vasodilation and reducing vascular smooth muscle and microvascular endothelial cell proliferation. Plays a role in blood glucose homeostasis contributing to the insulin secretion response by pancreatic beta cells. Triggers mitochondrial apoptosis during pachytene spermatocyte differentiation. Stimulates uterine epithelial cell proliferation. Enhances uterine contractility in response to oxytocin. Contributes to thymic atrophy by inducing apoptosis. Attenuates TNF-mediated endothelial expression of leukocyte adhesion molecules. Promotes neuritogenesis in developing hippocampal neurons. Plays a role in acute neuroprotection against NMDA-induced excitotoxic neuronal death. Increases firing activity and intracellular calcium oscillations in luteinizing hormone-releasing hormone (LHRH) neurons. Inhibits early osteoblast proliferation at growth plate during skeletal development. Inhibits mature adipocyte differentiation and lipid accumulation. Involved in the recruitment of beta-arrestin 2 ARRB2 at the plasma membrane in epithelial cells. Also functions as a receptor for aldosterone mediating rapid regulation of vascular contractibility through the PI3K/ERK signaling pathway. Involved in cancer progression regulation. Stimulates cancer-associated fibroblast (CAF) proliferation by a rapid genomic response through the EGFR/ERK transduction pathway. Associated with EGFR, may act as a transcription factor activating growth regulatory genes (c-fos, cyclin D1). Promotes integrin alpha-5/beta-1 and fibronectin (FN) matrix assembly in breast cancer cells. This is G-protein coupled estrogen receptor 1 (Gper1) from Rattus norvegicus (Rat).